The sequence spans 2130 residues: Dedicator of cytokinesis protein 7 (2130 aa).

Phosphoserine is present on Ser-30. A disordered region spans residues 137–175 (GFNPNTLDKQKERQKGLPRQVFESDEAPDGSSYQDEQDD). Residues Ser-180 and Ser-182 each carry the phosphoserine modification. Positions 365–395 (FKEADATKNKEKLEKLKSQADQFCQRLGKYR) form a coiled coil. Lys-381 carries the N6-methyllysine modification. Thr-450 carries the post-translational modification Phosphothreonine. Ser-452 is subject to Phosphoserine. The C2 DOCK-type domain maps to 561–727 (RNLLYIYPQS…GVFNVEVVAV (167 aa)). Residues Ser-862, Ser-864, Ser-882, Ser-888, Ser-896, Ser-900, and Ser-905 each carry the phosphoserine modification. Low complexity predominate over residues 888 to 901 (SLNLNRSRSLSNSN). A disordered region spans residues 888 to 966 (SLNLNRSRSL…SCNRMSSHTE (79 aa)). Thr-907 and Thr-909 each carry phosphothreonine. Phosphoserine occurs at positions 910, 929, 963, 1382, 1420, 1422, 1424, and 1428. A compositionally biased stretch (polar residues) spans 942–966 (SNPSPSAESTQAMDRSCNRMSSHTE). Residues 1668-2104 (KGYQTSPDLR…LQPLINRKIP (437 aa)) enclose the DOCKER domain. At Lys-1952 the chain carries N6-acetyllysine. Positions 2076-2102 (DQKEYQRELERNYHRLKEALQPLINRK) form a coiled coil. Ser-2119 is subject to Phosphoserine.

It belongs to the DOCK family. In terms of assembly, component of the DOCK7-induced septin displacement/DISP complex, at least composed of DOCK7, LRCH3 and MYO6. Interacts with TSC1. Interacts with nucleotide-free RAC1 and RAC3. Interacts with TACC3. Interacts with CRY1. Interacts with NOD2.

It localises to the cell projection. The protein resides in the axon. Its function is as follows. Functions as a guanine nucleotide exchange factor (GEF), which activates Rac1 and Rac3 Rho small GTPases by exchanging bound GDP for free GTP. Does not have a GEF activity for CDC42. Required for STMN1 'Ser-15' phosphorylation during axon formation and consequently for neuronal polarization. As part of the DISP complex, may regulate the association of septins with actin and thereby regulate the actin cytoskeleton. Has a role in pigmentation. Involved in the regulation of cortical neurogenesis through the control of radial glial cells (RGCs) proliferation versus differentiation; negatively regulates the basal-to-apical interkinetic nuclear migration of RGCs by antagonizing the microtubule growth-promoting function of TACC3. The polypeptide is Dedicator of cytokinesis protein 7 (Dock7) (Mus musculus (Mouse)).